Consider the following 399-residue polypeptide: Secreted RxLR effector protein 36 (399 aa).

The first 21 residues, 1 to 21 (MRGTIYVAIAILVAASSRSSA), serve as a signal peptide directing secretion. A RxLR-dEER motif is present at residues 50 to 71 (RILRESRGSNDKLAVGAGDEER). Residue N75 is glycosylated (N-linked (GlcNAc...) asparagine). The disordered stretch occupies residues 126–145 (IDPTPSNLGGQALHAPPNPD).

The protein belongs to the RxLR effector family.

It is found in the secreted. Its subcellular location is the host nucleus. In terms of biological role, secreted effector that completely suppresses the host cell death induced by cell death-inducing proteins. This Plasmopara viticola (Downy mildew of grapevine) protein is Secreted RxLR effector protein 36.